The sequence spans 121 residues: Huntingtin-interacting protein K (121 aa).

Over residues 1–13 (MATEGDVELELET) the composition is skewed to acidic residues. A disordered region spans residues 1 to 75 (MATEGDVELE…EQKAKQEREK (75 aa)). 2 stretches are compositionally biased toward basic and acidic residues: residues 20 to 47 (RPPE…EKEI) and 60 to 75 (GDRR…EREK). Ser30 bears the Phosphoserine mark. A required for association with the NAA10-NAA15 complex region spans residues 52–121 (LETAMSVIGD…VVEALIALTN (70 aa)). Residues 62-107 (RRSREQKAKQEREKELAKVTIKKEDLELIMTEMEISRAAAERSLRE) adopt a coiled-coil conformation.

In terms of assembly, component of the N-terminal acetyltransferase A (NatA)/HYPK complex at least composed of NAA10, NAA15 and HYPK, which has N-terminal acetyltransferase activity. Within the complex interacts with NAA10. Within the complex interacts with NAA15. Predominantly interacts with NAA15 in the NAA10-NAA15 complex (also called the NatA complex); the interaction with the NatA complex reduces the acetylation activity of the NatA complex. Interacts with HTT (via N-terminus). The NatA complex is required for HYPK stability and for reducing polyQ aggregation of HTT. Component of the N-terminal acetyltransferase E (NatE)/HYPK complex at least composed of NAA10, NAA15, NAA50 and HYPK. Within the complex interacts with NAA10 and NAA15. Does not interact with NAA50. Interaction with NAA15 reduces the capacity of NAA15 to interact with NAA50. Its capacity to interact with the NatA complex is reduced by NAA50. Does not interact with the N-terminal acetyltransferase B (NatB) complex component NAA25 or the N-terminal acetyltransferase C (NatC) complex component NAA35.

The protein resides in the nucleus. Its subcellular location is the cytoplasm. Functionally, component of several N-terminal acetyltransferase complexes. Inhibits the N-terminal acetylation activity of the N-terminal acetyltransferase NAA10-NAA15 complex (also called the NatA complex). Has chaperone-like activity preventing polyglutamine (polyQ) aggregation of HTT in neuronal cells probably while associated with the NatA complex. May play a role in the NatA complex-mediated N-terminal acetylation of PCNP. The protein is Huntingtin-interacting protein K of Homo sapiens (Human).